The sequence spans 487 residues: MMKFDNSYAHLPERFSAAVLPTPVKAPRLIAFNRTLAEELLLDVADLDDDRLAAIFSGNVVPQGAEPLAMAYAGHQFGGFVPQLGDGRAILLGEVIDVNGRRRDIQLKGSGPTPFSRRGDGRAALGPVLREYIVSEAMFALGIPATRALAAVLSGDRVQREVGLPGGVFTRVAASHIRVGTFQFFAAREDDEAIRSLADYVIDRHYPDAKNTENPYLALLRGIAERQCALIARWMMVGFIHGVMNTDNMAVSGETIDFGPCAFLDEYHPNKVFSSIDAQGRYAYNNQPGIAQWNIARLAECLLPLLDPEVEKAAELANAVLADFAAAFPQRWLTGMREKLGLTTEEEGDMDLIQSLLSLMQASEADFTLTFRRLSHAANGDAEPFRGMFIDIAGADAFLTRWRERAGREGISDSERSAAMLSINPAIIPRNHRIEELIEAAVEDGDFEPFHAMLTAIATPFEERPDNFVYMQPPMSHERVFRTFCGT.

Residues Gly85, Gly87, Arg88, Lys108, Asp120, Gly121, Arg171, and Arg178 each coordinate ATP. Asp247 functions as the Proton acceptor in the catalytic mechanism. Mg(2+)-binding residues include Asn248 and Asp257. ATP is bound at residue Asp257.

The protein belongs to the SELO family. Mg(2+) is required as a cofactor. The cofactor is Mn(2+).

It catalyses the reaction L-seryl-[protein] + ATP = 3-O-(5'-adenylyl)-L-seryl-[protein] + diphosphate. The catalysed reaction is L-threonyl-[protein] + ATP = 3-O-(5'-adenylyl)-L-threonyl-[protein] + diphosphate. It carries out the reaction L-tyrosyl-[protein] + ATP = O-(5'-adenylyl)-L-tyrosyl-[protein] + diphosphate. The enzyme catalyses L-histidyl-[protein] + UTP = N(tele)-(5'-uridylyl)-L-histidyl-[protein] + diphosphate. It catalyses the reaction L-seryl-[protein] + UTP = O-(5'-uridylyl)-L-seryl-[protein] + diphosphate. The catalysed reaction is L-tyrosyl-[protein] + UTP = O-(5'-uridylyl)-L-tyrosyl-[protein] + diphosphate. Its function is as follows. Nucleotidyltransferase involved in the post-translational modification of proteins. It can catalyze the addition of adenosine monophosphate (AMP) or uridine monophosphate (UMP) to a protein, resulting in modifications known as AMPylation and UMPylation. The protein is Protein nucleotidyltransferase YdiU of Agrobacterium fabrum (strain C58 / ATCC 33970) (Agrobacterium tumefaciens (strain C58)).